The sequence spans 435 residues: Hexane cyclase xenF (435 aa).

The first 23 residues, 1–23 (MSPAANMFRTLTLTALVSAVVSA), serve as a signal peptide directing secretion. N81 and N156 each carry an N-linked (GlcNAc...) asparagine glycan.

This sequence belongs to the Diels-Alderase family.

It participates in mycotoxin biosynthesis. Hexane cyclase; part of the gene cluster that mediates the biosynthesis of xenoacremones such as xenoacremone A, a compound that shows inhibitory activity toward the PI3K/AKT signaling pathway and which has the ability to induce apoptosis of A549 lung cancer cells. Within the pathway, cooperation of the hybrid PKS-NRPS xenE and the trans-acting enoyl reductase xenG is responsible for the formation of the reduced tyrosine-nonaketide derivative. The alpha/beta hydrolase xenA then accelerates intramolecular nucleophilic attack to give a pyrrolidone derivative. Subsequently, three enzymes, xenF, xenD, and xenC, coordinately participate in the conversion to xenoacremone B. XenF catalyzes sigmatropic rearrangement to form an A-ring, which leads to an unusual intermediate with a hexane ring, which is required for the formation of the tricarbocyclic product. Epoxidation catalyzed by xenD and the formation of the paracyclophane ether catalyzed by xenC initiate a spontaneous intramolecular Diels-Alder (IMDA) reaction to yield xenoacremone B. Spontaneous hydration of xenoacremone B leads to the formation of xenoacremone A, which undergoes subsequent methylation to afford xenoacremone C. The sequence is that of Hexane cyclase xenF from Xenoacremonium sinensis (Endophyte fungus).